The following is a 107-amino-acid chain: MTEQIKKLDPDTAIDIAYDIFLEMAPENLDPADILLFNMQFEERGAVEFVETADNWDEEIGVLIDPEEYAEVWIGLLNEKDEMDDVFAKFLISHREEDREYHIVWKE.

It belongs to the putative dsDNA mimic protein family.

May act as a double-stranded DNA (dsDNA) mimic. Probably regulates the activity of a dsDNA-binding protein. This chain is Putative double-stranded DNA mimic protein Asuc_1259, found in Actinobacillus succinogenes (strain ATCC 55618 / DSM 22257 / CCUG 43843 / 130Z).